Reading from the N-terminus, the 122-residue chain is Lithostathine (122 aa).

A signal peptide spans 1-26 (MLPSMSLPSLXWMLLSCLMLLSQVQG). A propeptide spanning residues 27–37 (EDSPADTPSAR) is cleaved from the precursor. The C-type lectin domain occupies 38 to 122 (ISCPKGSMAY…LEPNAGGWEW (85 aa)). An intrachain disulfide couples cysteine 40 to cysteine 51.

As to quaternary structure, cleaved to give an A chain and a B chain joined by a disulfide bond. As to expression, in pancreatic acinar cells.

It localises to the secreted. Might act as an inhibitor of spontaneous calcium carbonate precipitation. The polypeptide is Lithostathine (PTP) (Sus scrofa (Pig)).